We begin with the raw amino-acid sequence, 102 residues long: Aspartyl/glutamyl-tRNA(Asn/Gln) amidotransferase subunit C (102 aa).

This sequence belongs to the GatC family. Heterotrimer of A, B and C subunits.

The catalysed reaction is L-glutamyl-tRNA(Gln) + L-glutamine + ATP + H2O = L-glutaminyl-tRNA(Gln) + L-glutamate + ADP + phosphate + H(+). The enzyme catalyses L-aspartyl-tRNA(Asn) + L-glutamine + ATP + H2O = L-asparaginyl-tRNA(Asn) + L-glutamate + ADP + phosphate + 2 H(+). Functionally, allows the formation of correctly charged Asn-tRNA(Asn) or Gln-tRNA(Gln) through the transamidation of misacylated Asp-tRNA(Asn) or Glu-tRNA(Gln) in organisms which lack either or both of asparaginyl-tRNA or glutaminyl-tRNA synthetases. The reaction takes place in the presence of glutamine and ATP through an activated phospho-Asp-tRNA(Asn) or phospho-Glu-tRNA(Gln). This chain is Aspartyl/glutamyl-tRNA(Asn/Gln) amidotransferase subunit C, found in Bordetella parapertussis (strain 12822 / ATCC BAA-587 / NCTC 13253).